Reading from the N-terminus, the 903-residue chain is Calcium-activated chloride channel regulator 1 (903 aa).

The signal sequence occupies residues 1–21 (MVPRLTVILFLTLHLLPGMKS). Positions 45 to 199 (DEKLIQNIKE…HITGTNVIVK (155 aa)) are metalloprotease domain. Zn(2+) is bound at residue His-155. Residue Glu-156 is part of the active site. Zn(2+) is bound by residues His-159 and Asp-166. Residues 308-476 (VVCLVLDKSG…NGLTNAFSRI (169 aa)) enclose the VWFA domain. Residues Asn-360, Asn-372, Asn-504, and Asn-842 are each glycosylated (N-linked (GlcNAc...) asparagine). The helical transmembrane segment at 883-903 (GTKISAINLAIFALAMILSIV) threads the bilayer.

The protein belongs to the CLCR family. In terms of processing, glycosylated. Post-translationally, the 125-kDa product is autoproteolytically processed by the metalloprotease domain and yields to two cell-surface-associated subunits, a 90-kDa protein and a group of 37- to 41-kDa proteins. The cleavage is necessary for calcium-activated chloride channel (CaCC) activation activity. Trachea.

Its subcellular location is the apical cell membrane. Its function is as follows. May be involved in mediating calcium-activated chloride conductance. May play critical roles in goblet cell metaplasia, mucus hypersecretion, cystic fibrosis and AHR. May be involved in the regulation of mucus production and/or secretion by goblet cells. Involved in the regulation of tissue inflammation in the innate immune response. May play a role as a tumor suppressor. Induces MUC5AC. In Bos taurus (Bovine), this protein is Calcium-activated chloride channel regulator 1.